The following is a 263-amino-acid chain: N-acyl homoserine lactonase AttM (263 aa).

7 residues coordinate Zn(2+): His103, His105, Asp107, His108, His180, Asp202, and His247.

It belongs to the metallo-beta-lactamase superfamily. It depends on Zn(2+) as a cofactor.

It catalyses the reaction an N-acyl-L-homoserine lactone + H2O = an N-acyl-L-homoserine + H(+). In Rhizobium johnstonii (strain DSM 114642 / LMG 32736 / 3841) (Rhizobium leguminosarum bv. viciae), this protein is N-acyl homoserine lactonase AttM.